Reading from the N-terminus, the 290-residue chain is MPSTREIRRRIRSVKNLAQITRAMEMVSASKMRRAQRNVLATRPYADRLLDVMGELTGRAVGMRRGTLLEVRPVVKGVALIVVTPDRGLAGSLVANVLRRASRFILDEQEKKHTVEVLAIGKKGRDFMVRTRQNLVAEVTKLGDYPRLTDILGIATNVINGFLSGRYDEVYVLYSQFVNTLVQRPTIKRLLPIDPPHEPAERMVDYTYEPSQEEVLRALLPRFVEVQLYQAVLEAIASEHSARMVAMRNATDNAKELQRDLTLSYNKTRQANITKEVSEIASGAAALAEM.

The protein belongs to the ATPase gamma chain family. In terms of assembly, F-type ATPases have 2 components, CF(1) - the catalytic core - and CF(0) - the membrane proton channel. CF(1) has five subunits: alpha(3), beta(3), gamma(1), delta(1), epsilon(1). CF(0) has three main subunits: a, b and c.

The protein resides in the cell membrane. Its function is as follows. Produces ATP from ADP in the presence of a proton gradient across the membrane. The gamma chain is believed to be important in regulating ATPase activity and the flow of protons through the CF(0) complex. The chain is ATP synthase gamma chain from Roseiflexus castenholzii (strain DSM 13941 / HLO8).